The sequence spans 257 residues: Probable dihydroorotate dehydrogenase B (NAD(+)), electron transfer subunit (257 aa).

The region spanning 2-89 is the FAD-binding FR-type domain; it reads EKPVICRIKE…RGPYGTYFEP (88 aa). [2Fe-2S] cluster is bound by residues Cys-208, Cys-213, Cys-216, and Cys-226.

This sequence belongs to the PyrK family. As to quaternary structure, heterotetramer of 2 PyrK and 2 PyrD type B subunits. It depends on [2Fe-2S] cluster as a cofactor. Requires FAD as cofactor.

It functions in the pathway pyrimidine metabolism; UMP biosynthesis via de novo pathway; orotate from (S)-dihydroorotate (NAD(+) route): step 1/1. Its function is as follows. Responsible for channeling the electrons from the oxidation of dihydroorotate from the FMN redox center in the PyrD type B subunit to the ultimate electron acceptor NAD(+). This is Probable dihydroorotate dehydrogenase B (NAD(+)), electron transfer subunit from Methanocaldococcus jannaschii (strain ATCC 43067 / DSM 2661 / JAL-1 / JCM 10045 / NBRC 100440) (Methanococcus jannaschii).